Consider the following 722-residue polypeptide: ORC ubiquitin ligase 1 (722 aa).

The RING-type; degenerate zinc finger occupies 18-56; the sequence is CHICLGKVRQPVVCTNNHVFCSICIDLWLKNNSQCPACR. 2 coiled-coil regions span residues 87–129 and 157–267; these read LRKT…TILD and VVEW…KEDV. At Ser-210 the chain carries Phosphoserine. Residues 273–359 are disordered; it reads RAPSADSKGP…RLGARETPMD (87 aa). Residues 302 to 319 show a composition bias toward low complexity; it reads AGSASASHLASPSSSRLA. Residues 323 to 338 are compositionally biased toward polar residues; sequence SVRQESTSRTEPNCPQ. Basic and acidic residues predominate over residues 339–359; the sequence is NKDRYPKPTEPRLGARETPMD. Ser-522, Ser-549, Ser-557, Ser-564, and Ser-566 each carry phosphoserine. The span at 541–555 shows a compositional bias: polar residues; it reads MSESDNSKSPCNNGF. Disordered stretches follow at residues 541–585 and 691–722; these read MSES…GSKL and VPEK…ATKS. Positions 571 to 581 are enriched in basic and acidic residues; that stretch reads EFLEEPDKLQE. A compositionally biased stretch (polar residues) spans 698–722; it reads NGNQSTKRKIQSSLANASPSKATKS. Phosphoserine occurs at positions 715 and 717.

In terms of assembly, associates with ORC complex. Binds to chromatin; association is cell cycle-regulated, absent from mitotic chromosomes, is associated with chromatin from G1 and partially released from chromatin from mid S-phase. In terms of processing, auto-ubiquitinated.

Its subcellular location is the chromosome. It carries out the reaction S-ubiquitinyl-[E2 ubiquitin-conjugating enzyme]-L-cysteine + [acceptor protein]-L-lysine = [E2 ubiquitin-conjugating enzyme]-L-cysteine + N(6)-ubiquitinyl-[acceptor protein]-L-lysine.. Functionally, E3 ubiquitin ligase essential for DNA replication origin activation during S phase. Acts as a replication origin selector which selects the origins to be fired and catalyzes the multi-mono-ubiquitination of a subset of chromatin-bound ORC3 and ORC5 during S-phase. The protein is ORC ubiquitin ligase 1 of Mus musculus (Mouse).